The following is a 207-amino-acid chain: Chaperone protein TorD (207 aa).

This sequence belongs to the TorD/DmsD family. TorD subfamily.

The protein localises to the cytoplasm. Involved in the biogenesis of TorA. Acts on TorA before the insertion of the molybdenum cofactor and, as a result, probably favors a conformation of the apoenzyme that is competent for acquiring the cofactor. This Aggregatibacter aphrophilus (strain NJ8700) (Haemophilus aphrophilus) protein is Chaperone protein TorD.